A 1380-amino-acid polypeptide reads, in one-letter code: DNA-directed RNA polymerase subunit beta (1380 aa).

This sequence belongs to the RNA polymerase beta chain family. As to quaternary structure, the RNAP catalytic core consists of 2 alpha, 1 beta, 1 beta' and 1 omega subunit. When a sigma factor is associated with the core the holoenzyme is formed, which can initiate transcription.

It carries out the reaction RNA(n) + a ribonucleoside 5'-triphosphate = RNA(n+1) + diphosphate. In terms of biological role, DNA-dependent RNA polymerase catalyzes the transcription of DNA into RNA using the four ribonucleoside triphosphates as substrates. This Ehrlichia ruminantium (strain Gardel) protein is DNA-directed RNA polymerase subunit beta.